Here is a 394-residue protein sequence, read N- to C-terminus: Quinolinate synthase (394 aa).

2 residues coordinate iminosuccinate: His57 and Ser74. Cys121 serves as a coordination point for [4Fe-4S] cluster. Residues 153-155 (YMN) and Ser174 each bind iminosuccinate. Cys243 contributes to the [4Fe-4S] cluster binding site. Iminosuccinate-binding positions include 269-271 (HPE) and Thr286. [4Fe-4S] cluster is bound at residue Cys333.

Belongs to the quinolinate synthase family. Type 3 subfamily. [4Fe-4S] cluster serves as cofactor.

It localises to the cytoplasm. It carries out the reaction iminosuccinate + dihydroxyacetone phosphate = quinolinate + phosphate + 2 H2O + H(+). The protein operates within cofactor biosynthesis; NAD(+) biosynthesis; quinolinate from iminoaspartate: step 1/1. Catalyzes the condensation of iminoaspartate with dihydroxyacetone phosphate to form quinolinate. The protein is Quinolinate synthase of Corynebacterium glutamicum (strain ATCC 13032 / DSM 20300 / JCM 1318 / BCRC 11384 / CCUG 27702 / LMG 3730 / NBRC 12168 / NCIMB 10025 / NRRL B-2784 / 534).